We begin with the raw amino-acid sequence, 327 residues long: GPI-linked NAD(P)(+)--arginine ADP-ribosyltransferase 1 (327 aa).

The N-terminal stretch at M1 to A22 is a signal peptide. 2 disulfides stabilise this stretch: C53–C277 and C174–C224. N65 carries an N-linked (GlcNAc...) asparagine glycan. A TR mART core domain is found at Q73–S273. Residues Y121 and R179 each contribute to the NAD(+) site. Catalysis depends on residues R179 and S202. NAD(+) is bound at residue S233. The active site involves E240. N253 is a glycosylation site (N-linked (GlcNAc...) asparagine). A lipid anchor (GPI-anchor amidated serine) is attached at S295. Residues A296–L327 constitute a propeptide, removed in mature form.

The protein belongs to the Arg-specific ADP-ribosyltransferase family.

The protein resides in the sarcoplasmic reticulum membrane. It carries out the reaction L-arginyl-[protein] + NAD(+) = N(omega)-(ADP-D-ribosyl)-L-arginyl-[protein] + nicotinamide + H(+). In terms of biological role, has ADP-ribosyltransferase activity toward GLP1R. The sequence is that of GPI-linked NAD(P)(+)--arginine ADP-ribosyltransferase 1 (ART1) from Homo sapiens (Human).